The primary structure comprises 292 residues: Protoheme IX farnesyltransferase (292 aa).

Transmembrane regions (helical) follow at residues 13-33 (ILFGNFITTLGGFFLAAQGSI), 35-55 (ILLLLLTLIGTTLVVASGCVV), 84-104 (VALVYAFVLGVMGFSILWFGV), 106-126 (GYAFLFAMIGFIVYVGFYSLW), 135-155 (TVIGSISGASPPVIGYTAVTH), 161-181 (ALLLFLAYALWQMPHSWAIAI), 206-226 (IECVIYILLFAAVLNGLYCFG), 231-251 (FFLITFNALTAYWFYLSIIGF), and 263-283 (FFLYSVILITLLSLSFSFTYQ).

The protein belongs to the UbiA prenyltransferase family. Protoheme IX farnesyltransferase subfamily.

Its subcellular location is the cell inner membrane. The enzyme catalyses heme b + (2E,6E)-farnesyl diphosphate + H2O = Fe(II)-heme o + diphosphate. It participates in porphyrin-containing compound metabolism; heme O biosynthesis; heme O from protoheme: step 1/1. Its function is as follows. Converts heme B (protoheme IX) to heme O by substitution of the vinyl group on carbon 2 of heme B porphyrin ring with a hydroxyethyl farnesyl side group. This chain is Protoheme IX farnesyltransferase, found in Acinetobacter baumannii (strain AB307-0294).